The following is a 24-amino-acid chain: Brevinin-1Ba (24 aa).

A disulfide bridge connects residues cysteine 18 and cysteine 24.

In terms of tissue distribution, expressed by the skin glands.

It is found in the secreted. Functionally, antibacterial activity against Gram-positive bacterium S.aureus. The protein is Brevinin-1Ba of Lithobates berlandieri (Rio Grande leopard frog).